The chain runs to 582 residues: DNA mismatch repair protein MutL (582 aa).

This sequence belongs to the DNA mismatch repair MutL/HexB family.

Its function is as follows. This protein is involved in the repair of mismatches in DNA. It is required for dam-dependent methyl-directed DNA mismatch repair. May act as a 'molecular matchmaker', a protein that promotes the formation of a stable complex between two or more DNA-binding proteins in an ATP-dependent manner without itself being part of a final effector complex. The sequence is that of DNA mismatch repair protein MutL from Acidiphilium cryptum (strain JF-5).